A 291-amino-acid polypeptide reads, in one-letter code: 4-diphosphocytidyl-2-C-methyl-D-erythritol kinase (291 aa).

K14 is a catalytic residue. 96–106 (PFGAGLGGGSS) lines the ATP pocket. Residue D138 is part of the active site.

This sequence belongs to the GHMP kinase family. IspE subfamily.

It carries out the reaction 4-CDP-2-C-methyl-D-erythritol + ATP = 4-CDP-2-C-methyl-D-erythritol 2-phosphate + ADP + H(+). It participates in isoprenoid biosynthesis; isopentenyl diphosphate biosynthesis via DXP pathway; isopentenyl diphosphate from 1-deoxy-D-xylulose 5-phosphate: step 3/6. In terms of biological role, catalyzes the phosphorylation of the position 2 hydroxy group of 4-diphosphocytidyl-2C-methyl-D-erythritol. The sequence is that of 4-diphosphocytidyl-2-C-methyl-D-erythritol kinase from Chlorobium phaeovibrioides (strain DSM 265 / 1930) (Prosthecochloris vibrioformis (strain DSM 265)).